Reading from the N-terminus, the 572-residue chain is Phosphoenolpyruvate-protein phosphotransferase (572 aa).

The active-site Tele-phosphohistidine intermediate is His191. Phosphoenolpyruvate contacts are provided by Arg298 and Arg334. Glu433 and Asp457 together coordinate Mg(2+). Phosphoenolpyruvate is bound by residues 456 to 457 and Arg467; that span reads ND. The active-site Proton donor is Cys504.

It belongs to the PEP-utilizing enzyme family. In terms of assembly, homodimer. It depends on Mg(2+) as a cofactor.

It is found in the cytoplasm. It carries out the reaction L-histidyl-[protein] + phosphoenolpyruvate = N(pros)-phospho-L-histidyl-[protein] + pyruvate. Its function is as follows. General (non sugar-specific) component of the phosphoenolpyruvate-dependent sugar phosphotransferase system (sugar PTS). This major carbohydrate active-transport system catalyzes the phosphorylation of incoming sugar substrates concomitantly with their translocation across the cell membrane. Enzyme I transfers the phosphoryl group from phosphoenolpyruvate (PEP) to the phosphoryl carrier protein (HPr). The polypeptide is Phosphoenolpyruvate-protein phosphotransferase (ptsI) (Staphylococcus aureus (strain COL)).